We begin with the raw amino-acid sequence, 137 residues long: Holo-[acyl-carrier-protein] synthase (137 aa).

Mg(2+) is bound by residues aspartate 8 and glutamate 57.

Belongs to the P-Pant transferase superfamily. AcpS family. Mg(2+) serves as cofactor.

The protein resides in the cytoplasm. The enzyme catalyses apo-[ACP] + CoA = holo-[ACP] + adenosine 3',5'-bisphosphate + H(+). Functionally, transfers the 4'-phosphopantetheine moiety from coenzyme A to a Ser of acyl-carrier-protein. The chain is Holo-[acyl-carrier-protein] synthase from Mesorhizobium japonicum (strain LMG 29417 / CECT 9101 / MAFF 303099) (Mesorhizobium loti (strain MAFF 303099)).